The sequence spans 115 residues: MEAKIQFIKGLDEKVLPDVRLTRSRDGSTGTATFRFKNPNILDKSTAKEGEITGMYLIDQEGTLETRDVNAQFINGKPEAIESIYIMKSPEAWDRFMRFMERYGESNGLVFTKAS.

Belongs to the Psb28 family. In terms of assembly, part of the photosystem II complex.

It is found in the plastid. It localises to the chloroplast thylakoid membrane. The sequence is that of Photosystem II reaction center Psb28 protein from Trieres chinensis (Marine centric diatom).